A 99-amino-acid polypeptide reads, in one-letter code: Defensin-A4 (99 aa).

Residues 1-21 (MKTLCLLFAVLCLVTWTQARG) form the signal peptide. Positions 22-68 (AEVEENLTAQDGEVDIAGDNGDVQLTLNTDDFESFTLKTLTLGHPRV) are excised as a propeptide. 3 cysteine pairs are disulfide-bonded: cysteine 73-cysteine 97, cysteine 75-cysteine 89, and cysteine 79-cysteine 96.

It belongs to the alpha-defensin family. Lowly expressed in spleen, and expressed at lower levels in kidney and lung.

The protein localises to the secreted. Its function is as follows. Has antimicrobial activity. This chain is Defensin-A4, found in Ornithorhynchus anatinus (Duckbill platypus).